A 459-amino-acid chain; its full sequence is RuvB-like helicase 1 (459 aa).

75 to 82 serves as a coordination point for ATP; sequence GGPSTGKT.

This sequence belongs to the RuvB family. In terms of assembly, may form heterododecamers with RVB2. Component of the SWR1 chromatin remodeling complex, the INO80 chromatin remodeling complex, and of the R2TP complex.

It localises to the nucleus. The catalysed reaction is ATP + H2O = ADP + phosphate + H(+). DNA helicase which participates in several chromatin remodeling complexes, including the SWR1 and the INO80 complexes. The SWR1 complex mediates the ATP-dependent exchange of histone H2A for the H2A variant HZT1 leading to transcriptional regulation of selected genes by chromatin remodeling. The INO80 complex remodels chromatin by shifting nucleosomes and is involved in DNA repair. Also involved in pre-rRNA processing. This chain is RuvB-like helicase 1 (RVB1), found in Eremothecium gossypii (strain ATCC 10895 / CBS 109.51 / FGSC 9923 / NRRL Y-1056) (Yeast).